Reading from the N-terminus, the 215-residue chain is Deoxyribose-phosphate aldolase (215 aa).

Catalysis depends on Asp89, which acts as the Proton donor/acceptor. The active-site Schiff-base intermediate with acetaldehyde is Lys153. Catalysis depends on Lys182, which acts as the Proton donor/acceptor.

Belongs to the DeoC/FbaB aldolase family. DeoC type 1 subfamily.

It localises to the cytoplasm. The enzyme catalyses 2-deoxy-D-ribose 5-phosphate = D-glyceraldehyde 3-phosphate + acetaldehyde. It functions in the pathway carbohydrate degradation; 2-deoxy-D-ribose 1-phosphate degradation; D-glyceraldehyde 3-phosphate and acetaldehyde from 2-deoxy-alpha-D-ribose 1-phosphate: step 2/2. Catalyzes a reversible aldol reaction between acetaldehyde and D-glyceraldehyde 3-phosphate to generate 2-deoxy-D-ribose 5-phosphate. In Lactiplantibacillus plantarum (strain ATCC BAA-793 / NCIMB 8826 / WCFS1) (Lactobacillus plantarum), this protein is Deoxyribose-phosphate aldolase.